Consider the following 178-residue polypeptide: Interleukin-10 (178 aa).

The N-terminal stretch at 1 to 18 (MPGSALLCCLALLAGVKA) is a signal peptide. Cystine bridges form between cysteine 30/cysteine 126 and cysteine 80/cysteine 132. N-linked (GlcNAc...) asparagine glycosylation is present at asparagine 67. N-linked (GlcNAc...) asparagine glycosylation is present at asparagine 134.

This sequence belongs to the IL-10 family. As to quaternary structure, homodimer. Interacts with IL10RA and IL10RB.

It is found in the secreted. Major immune regulatory cytokine that acts on many cells of the immune system where it has profound anti-inflammatory functions, limiting excessive tissue disruption caused by inflammation. Mechanistically, IL10 binds to its heterotetrameric receptor comprising IL10RA and IL10RB leading to JAK1 and STAT2-mediated phosphorylation of STAT3. In turn, STAT3 translocates to the nucleus where it drives expression of anti-inflammatory mediators. Targets antigen-presenting cells (APCs) such as macrophages and monocytes and inhibits their release of pro-inflammatory cytokines including granulocyte-macrophage colony-stimulating factor /GM-CSF, granulocyte colony-stimulating factor/G-CSF, IL-1 alpha, IL-1 beta, IL-6, IL-8 and TNF-alpha. Also interferes with antigen presentation by reducing the expression of MHC-class II and co-stimulatory molecules, thereby inhibiting their ability to induce T cell activation. In addition, controls the inflammatory response of macrophages by reprogramming essential metabolic pathways including mTOR signaling. This is Interleukin-10 (IL10) from Cavia porcellus (Guinea pig).